Here is a 620-residue protein sequence, read N- to C-terminus: Glutathione-regulated potassium-efflux system protein KefC (620 aa).

A run of 12 helical transmembrane segments spans residues 4 to 24, 26 to 46, 54 to 74, 90 to 110, 114 to 134, 149 to 169, 178 to 198, 218 to 238, 270 to 290, 294 to 314, 327 to 347, and 359 to 379; these read HTLI…PIAV, LGLG…PWGL, SILH…GLEL, GALQ…LLGL, VAEL…MQAM, FAVL…IPLL, MGAF…VVLL, VFSA…EEVG, GLLL…GTLL, LRIV…LWLI, WFAV…GAAQ, and SLTL…VILN. The 120-residue stretch at 399–518 folds into the RCK N-terminal domain; sequence QPRVIIAGFG…AGVEKPERET (120 aa). Positions 597–620 are disordered; sequence GWQGTEEGKHTGNMADEPETKPSS.

It belongs to the monovalent cation:proton antiporter 2 (CPA2) transporter (TC 2.A.37) family. KefC subfamily. Homodimer. Interacts with the regulatory subunit KefF.

The protein resides in the cell inner membrane. In terms of biological role, pore-forming subunit of a potassium efflux system that confers protection against electrophiles. Catalyzes K(+)/H(+) antiport. In Escherichia coli (strain K12 / MC4100 / BW2952), this protein is Glutathione-regulated potassium-efflux system protein KefC.